The sequence spans 190 residues: Probable thymidylate kinase (190 aa).

Residue 7–14 (GIDGAGKT) coordinates ATP.

It belongs to the thymidylate kinase family.

The enzyme catalyses dTMP + ATP = dTDP + ADP. The protein is Probable thymidylate kinase of Thermoplasma volcanium (strain ATCC 51530 / DSM 4299 / JCM 9571 / NBRC 15438 / GSS1).